The chain runs to 1403 residues: Baculoviral IAP repeat-containing protein 1f (1403 aa).

3 BIR repeats span residues 60–127 (EAKR…CEFL), 159–227 (EEAR…CEFL), and 278–345 (EELR…CVFL). Zn(2+)-binding residues include cysteine 315, cysteine 318, histidine 335, and cysteine 342. Residues 464 to 759 (SVMCVEGEAG…EFLAAVRLTE (296 aa)) form the NACHT domain. 473 to 478 (GSGKTT) lines the ATP pocket.

Component of the NLRC4 inflammasome, at least composed of NLRC4, caspase-1 (CASP1) and some NAIP protein. As to quaternary structure, (Microbial infection) Interacts with S.typhimurium (Salmonella) flagellin.

Functionally, sensor component of the NLRC4 inflammasome that specifically recognizes and binds flagellin from pathogenic bacteria. Association of pathogenic bacteria proteins drives in turn drive assembly and activation of the NLRC4 inflammasome, promoting caspase-1 activation, cytokine production and macrophage pyroptosis. The NLRC4 inflammasome is activated as part of the innate immune response to a range of intracellular bacteria. The NLRC4 inflammasome senses Gram-negative bacteria such as L.pneumophila and P.aeruginosa, enteric pathogens S.typhimurium (Salmonella) and S.flexneri. May contribute to prevent motor-neuron apoptosis induced by a variety of signals. This Mus musculus (Mouse) protein is Baculoviral IAP repeat-containing protein 1f (Naip6).